Reading from the N-terminus, the 225-residue chain is ATP-dependent dethiobiotin synthetase BioD (225 aa).

Residue 12-17 participates in ATP binding; the sequence is GVGKTV. Thr16 contributes to the Mg(2+) binding site. Lys37 is a catalytic residue. Residue Thr41 participates in substrate binding. ATP contacts are provided by residues Asp46, 105-108, 166-167, and 196-198; these read EGAG, GS, and PEG. Residues Asp46 and Glu105 each coordinate Mg(2+).

This sequence belongs to the dethiobiotin synthetase family. Homodimer. Mg(2+) serves as cofactor.

The protein localises to the cytoplasm. The catalysed reaction is (7R,8S)-7,8-diammoniononanoate + CO2 + ATP = (4R,5S)-dethiobiotin + ADP + phosphate + 3 H(+). Its pathway is cofactor biosynthesis; biotin biosynthesis; biotin from 7,8-diaminononanoate: step 1/2. Its function is as follows. Catalyzes a mechanistically unusual reaction, the ATP-dependent insertion of CO2 between the N7 and N8 nitrogen atoms of 7,8-diaminopelargonic acid (DAPA, also called 7,8-diammoniononanoate) to form a ureido ring. This Mycobacteroides abscessus (strain ATCC 19977 / DSM 44196 / CCUG 20993 / CIP 104536 / JCM 13569 / NCTC 13031 / TMC 1543 / L948) (Mycobacterium abscessus) protein is ATP-dependent dethiobiotin synthetase BioD.